The primary structure comprises 170 residues: Cyclic pyranopterin monophosphate synthase (170 aa).

Substrate contacts are provided by residues 75–77 (MCH) and 115–116 (ME). Asp-130 is an active-site residue.

This sequence belongs to the MoaC family. Homohexamer; trimer of dimers.

The catalysed reaction is (8S)-3',8-cyclo-7,8-dihydroguanosine 5'-triphosphate = cyclic pyranopterin phosphate + diphosphate. It functions in the pathway cofactor biosynthesis; molybdopterin biosynthesis. Functionally, catalyzes the conversion of (8S)-3',8-cyclo-7,8-dihydroguanosine 5'-triphosphate to cyclic pyranopterin monophosphate (cPMP). The chain is Cyclic pyranopterin monophosphate synthase from Bacillus velezensis (strain DSM 23117 / BGSC 10A6 / LMG 26770 / FZB42) (Bacillus amyloliquefaciens subsp. plantarum).